Here is a 41-residue protein sequence, read N- to C-terminus: Large ribosomal subunit protein bL36 (41 aa).

Belongs to the bacterial ribosomal protein bL36 family.

This is Large ribosomal subunit protein bL36 from Nitrobacter winogradskyi (strain ATCC 25391 / DSM 10237 / CIP 104748 / NCIMB 11846 / Nb-255).